Consider the following 351-residue polypeptide: Flagellin (351 aa).

The protein belongs to the bacterial flagellin family.

The protein localises to the secreted. Its subcellular location is the bacterial flagellum. Functionally, flagellin is the subunit protein which polymerizes to form the filaments of bacterial flagella. This chain is Flagellin (fliC), found in Serratia marcescens.